A 290-amino-acid polypeptide reads, in one-letter code: Bifunctional protein FolD 1 (290 aa).

NADP(+) contacts are provided by residues 164-166, isoleucine 193, and isoleucine 236; that span reads GRS.

The protein belongs to the tetrahydrofolate dehydrogenase/cyclohydrolase family. Homodimer.

It catalyses the reaction (6R)-5,10-methylene-5,6,7,8-tetrahydrofolate + NADP(+) = (6R)-5,10-methenyltetrahydrofolate + NADPH. It carries out the reaction (6R)-5,10-methenyltetrahydrofolate + H2O = (6R)-10-formyltetrahydrofolate + H(+). The protein operates within one-carbon metabolism; tetrahydrofolate interconversion. Its function is as follows. Catalyzes the oxidation of 5,10-methylenetetrahydrofolate to 5,10-methenyltetrahydrofolate and then the hydrolysis of 5,10-methenyltetrahydrofolate to 10-formyltetrahydrofolate. In Geobacter metallireducens (strain ATCC 53774 / DSM 7210 / GS-15), this protein is Bifunctional protein FolD 1.